The following is a 469-amino-acid chain: Histone chaperone rtt-106 (469 aa).

Disordered stretches follow at residues 54 to 73 (EEPATKRRRVEAQTSGPNGA) and 364 to 469 (MAEQ…EGEE). Composition is skewed to basic and acidic residues over residues 364-379 (MAEQRKAKKQLAENAK) and 402-415 (ELERAQKEEEQRLQ). Acidic residues-rich tracts occupy residues 416-433 (DEEDEEEEDYDPGSEGES) and 440-469 (SEEEEEEEDGEGEGDEDDDEDMGEGLEGEE).

The protein belongs to the RTT106 family. In terms of assembly, interacts with histones H3 and H4.

Its subcellular location is the nucleus. It localises to the chromosome. Its function is as follows. Histones H3 and H4 chaperone involved in the nucleosome formation and heterochromatin silencing. Required for the deposition of H3K56ac-carrying H3-H4 complex onto newly-replicated DNA. Plays a role in the transcriptional regulation of the cell-cycle dependent histone genes by creating a repressive structure at the core histone gene promoter. In Neurospora crassa (strain ATCC 24698 / 74-OR23-1A / CBS 708.71 / DSM 1257 / FGSC 987), this protein is Histone chaperone rtt-106 (rtt-106).